Here is a 466-residue protein sequence, read N- to C-terminus: MTQRVRTRFAPSPTGFIHLGNIRSALYPWAFARRMQGDFILRIEDTDVERSSQEAVDVILESMAWLELDIDEGPFYQMQRMDRYREVVAQMVEAGLAYRCYMSTAELDALREAQRERGEKPRYNGFWRPEPGKVLPEPPAGVDPVIRFKNPIGGSVVWDDAVKGRIEISNDELDDLVIARPDGTPTYNFCVVVDDLDMRITHVIRGDDHVNNTPRQINIIRALGGTPPVYAHLPTVLNEQGEKMSKRHGAMSVTGYRDEGYLPEAVLNYLARLGWAHGDAEIFSREQFVEWFDLEHLGKSPAQYNPEKLAWLNNHYIKVGDNQRLATLTQPFIEALGGKVEGADLVGVIALVKDRANTLKEVAQAALLFYRGEPQADAALKAEHLTPEIQPALAALSARLGALPSWTREEISATFKAVLAEFGLKMPKLAMPVRLLVAGQLQTPSIDAVLELFGRDTVLRRLAAAA.

Positions 11-21 (PSPTGFIHLGN) match the 'HIGH' region motif. The short motif at 243–247 (KMSKR) is the 'KMSKS' region element. Residue lysine 246 participates in ATP binding.

This sequence belongs to the class-I aminoacyl-tRNA synthetase family. Glutamate--tRNA ligase type 1 subfamily. As to quaternary structure, monomer.

It is found in the cytoplasm. It catalyses the reaction tRNA(Glu) + L-glutamate + ATP = L-glutamyl-tRNA(Glu) + AMP + diphosphate. Functionally, catalyzes the attachment of glutamate to tRNA(Glu) in a two-step reaction: glutamate is first activated by ATP to form Glu-AMP and then transferred to the acceptor end of tRNA(Glu). This is Glutamate--tRNA ligase from Cupriavidus taiwanensis (strain DSM 17343 / BCRC 17206 / CCUG 44338 / CIP 107171 / LMG 19424 / R1) (Ralstonia taiwanensis (strain LMG 19424)).